Reading from the N-terminus, the 503-residue chain is Maturase K (503 aa).

It belongs to the intron maturase 2 family. MatK subfamily.

The protein localises to the plastid. Its subcellular location is the chloroplast. Usually encoded in the trnK tRNA gene intron. Probably assists in splicing its own and other chloroplast group II introns. This is Maturase K from Rosa foetida (Austrian briar).